We begin with the raw amino-acid sequence, 156 residues long: Ribosome maturation factor RimP (156 aa).

It belongs to the RimP family.

The protein localises to the cytoplasm. In terms of biological role, required for maturation of 30S ribosomal subunits. In Treponema pallidum (strain Nichols), this protein is Ribosome maturation factor RimP.